A 193-amino-acid polypeptide reads, in one-letter code: Imidazoleglycerol-phosphate dehydratase (193 aa).

The protein belongs to the imidazoleglycerol-phosphate dehydratase family.

The protein localises to the cytoplasm. The catalysed reaction is D-erythro-1-(imidazol-4-yl)glycerol 3-phosphate = 3-(imidazol-4-yl)-2-oxopropyl phosphate + H2O. The protein operates within amino-acid biosynthesis; L-histidine biosynthesis; L-histidine from 5-phospho-alpha-D-ribose 1-diphosphate: step 6/9. This is Imidazoleglycerol-phosphate dehydratase from Saccharolobus islandicus (strain M.14.25 / Kamchatka #1) (Sulfolobus islandicus).